The sequence spans 358 residues: DNA integrity scanning protein DisA (358 aa).

Positions 6-144 (RPTLREAVAR…RGERHVLTDS (139 aa)) constitute a DAC domain. ATP is bound by residues Gly73, Leu91, and 104–108 (TRHRS).

This sequence belongs to the DisA family. Homooctamer. It depends on Mg(2+) as a cofactor.

It carries out the reaction 2 ATP = 3',3'-c-di-AMP + 2 diphosphate. Its function is as follows. Participates in a DNA-damage check-point. DisA forms globular foci that rapidly scan along the chromosomes searching for lesions. In terms of biological role, also has diadenylate cyclase activity, catalyzing the condensation of 2 ATP molecules into cyclic di-AMP (c-di-AMP). c-di-AMP likely acts as a signaling molecule that may couple DNA integrity with a cellular process. This is DNA integrity scanning protein DisA from Mycobacterium bovis (strain ATCC BAA-935 / AF2122/97).